An 89-amino-acid polypeptide reads, in one-letter code: Defensin-like protein 197 (89 aa).

Positions 1–26 (MKFVSVFLVLFIFFLVVLEAPEKIEA) are cleaved as a signal peptide. 4 disulfide bridges follow: Cys-33–Cys-86, Cys-46–Cys-70, Cys-55–Cys-81, and Cys-59–Cys-83.

This sequence belongs to the DEFL family. Protease inhibitor I18 (RTI/MTI-2) subfamily.

It is found in the secreted. The chain is Defensin-like protein 197 (ATTI6) from Arabidopsis thaliana (Mouse-ear cress).